The following is a 207-amino-acid chain: ATP synthase subunit 5, mitochondrial (207 aa).

The protein belongs to the ATPase delta chain family. F-type ATPases have 2 components, CF(1) - the catalytic core - and CF(0) - the membrane proton channel. CF(1) has five subunits: alpha(3), beta(3), gamma(1), delta(1), epsilon(1). CF(0) has three main subunits: a, b and c.

The protein resides in the mitochondrion. It is found in the mitochondrion inner membrane. Functionally, mitochondrial membrane ATP synthase (F(1)F(0) ATP synthase or Complex V) produces ATP from ADP in the presence of a proton gradient across the membrane which is generated by electron transport complexes of the respiratory chain. F-type ATPases consist of two structural domains, F(1) - containing the extramembraneous catalytic core and F(0) - containing the membrane proton channel, linked together by a central stalk and a peripheral stalk. During catalysis, ATP synthesis in the catalytic domain of F(1) is coupled via a rotary mechanism of the central stalk subunits to proton translocation. Part of the complex F(0) domain and the peripheric stalk, which acts as a stator to hold the catalytic alpha(3)beta(3) subcomplex and subunit a/ATP6 static relative to the rotary elements. This is ATP synthase subunit 5, mitochondrial (ATP5) from Candida glabrata (strain ATCC 2001 / BCRC 20586 / JCM 3761 / NBRC 0622 / NRRL Y-65 / CBS 138) (Yeast).